A 433-amino-acid chain; its full sequence is Trigger factor (433 aa).

The region spanning 161-246 is the PPIase FKBP-type domain; the sequence is DSRVTIDFIG…LHKVEAQELP (86 aa).

It belongs to the FKBP-type PPIase family. Tig subfamily.

The protein localises to the cytoplasm. The enzyme catalyses [protein]-peptidylproline (omega=180) = [protein]-peptidylproline (omega=0). In terms of biological role, involved in protein export. Acts as a chaperone by maintaining the newly synthesized protein in an open conformation. Functions as a peptidyl-prolyl cis-trans isomerase. The protein is Trigger factor of Photobacterium profundum (strain SS9).